Consider the following 1516-residue polypeptide: Neurite extension and migration factor (1516 aa).

Residues 380–405 (LDKKKGKEEGQEDKGVEKKDGKDNGE) show a composition bias toward basic and acidic residues. Disordered stretches follow at residues 380–440 (LDKK…GSFS), 589–610 (QKKK…SQKQ), 1158–1225 (TFND…STKK), 1373–1419 (TPQE…PGYN), and 1437–1479 (LGNN…ESGT). Composition is skewed to polar residues over residues 596 to 610 (NTNT…SQKQ), 1158 to 1170 (TFND…STNN), and 1185 to 1194 (GAMNQSSSQK). Residues 1443–1453 (THKKLYRHKSS) show a composition bias toward basic residues. Residues 1456–1479 (ALRDEKCKGKHMEREQVHKDESGT) show a composition bias toward basic and acidic residues.

Highly expressed in fetal and adult brain, predominantly in the cerebral cortex and the cerebellum. Also expressed in other tissues but to a lesser extent.

The protein resides in the nucleus. The protein localises to the cytoplasm. Involved in neurite outgrowth by regulating cell-cell adhesion via the N-cadherin signaling pathway. May act by regulating expression of protein-coding genes, such as N-cadherins and integrin beta-1 (ITGB1). The polypeptide is Neurite extension and migration factor (Homo sapiens (Human)).